A 208-amino-acid chain; its full sequence is CKLF-like MARVEL transmembrane domain-containing protein 4 (208 aa).

Over residues 1 to 11 the composition is skewed to acidic residues; the sequence is MRGGEELDGFE. Residues 1–38 are disordered; it reads MRGGEELDGFEGEASSTSMISGASSPYQPTTEPVSQRR. Low complexity predominate over residues 15 to 25; it reads SSTSMISGASS. The 128-residue stretch at 49-176 folds into the MARVEL domain; that stretch reads YLRGALGRLK…STFLAMQKWR (128 aa). Helical transmembrane passes span 59 to 79, 85 to 105, 123 to 143, and 151 to 171; these read VAQV…MECS, YFFE…LILF, LVNT…LAAL, and IAAV…TFLA. Serine 194 carries the phosphoserine modification.

It belongs to the chemokine-like factor family. In terms of assembly, interacts with PD1L1 and CMTM6.

It localises to the membrane. Its function is as follows. Acts as a backup for CMTM6 to regulate plasma membrane expression of PD-L1/CD274, an immune inhibitory ligand critical for immune tolerance to self and antitumor immunity. May protect PD-L1/CD274 from being polyubiquitinated and targeted for degradation. The chain is CKLF-like MARVEL transmembrane domain-containing protein 4 from Mus musculus (Mouse).